A 150-amino-acid polypeptide reads, in one-letter code: SsrA-binding protein (150 aa).

This sequence belongs to the SmpB family.

Its subcellular location is the cytoplasm. Functionally, required for rescue of stalled ribosomes mediated by trans-translation. Binds to transfer-messenger RNA (tmRNA), required for stable association of tmRNA with ribosomes. tmRNA and SmpB together mimic tRNA shape, replacing the anticodon stem-loop with SmpB. tmRNA is encoded by the ssrA gene; the 2 termini fold to resemble tRNA(Ala) and it encodes a 'tag peptide', a short internal open reading frame. During trans-translation Ala-aminoacylated tmRNA acts like a tRNA, entering the A-site of stalled ribosomes, displacing the stalled mRNA. The ribosome then switches to translate the ORF on the tmRNA; the nascent peptide is terminated with the 'tag peptide' encoded by the tmRNA and targeted for degradation. The ribosome is freed to recommence translation, which seems to be the essential function of trans-translation. The chain is SsrA-binding protein from Chlamydia caviae (strain ATCC VR-813 / DSM 19441 / 03DC25 / GPIC) (Chlamydophila caviae).